The primary structure comprises 71 residues: ATP synthase subunit c (71 aa).

2 helical membrane-spanning segments follow: residues 5-25 (VLAAGIAVLSGIGAGVGIGIA) and 46-66 (FFILGAALCETTAIYGLVMAF).

This sequence belongs to the ATPase C chain family. F-type ATPases have 2 components, F(1) - the catalytic core - and F(0) - the membrane proton channel. F(1) has five subunits: alpha(3), beta(3), gamma(1), delta(1), epsilon(1). F(0) has three main subunits: a(1), b(2) and c(10-14). The alpha and beta chains form an alternating ring which encloses part of the gamma chain. F(1) is attached to F(0) by a central stalk formed by the gamma and epsilon chains, while a peripheral stalk is formed by the delta and b chains.

It is found in the cell membrane. Functionally, f(1)F(0) ATP synthase produces ATP from ADP in the presence of a proton or sodium gradient. F-type ATPases consist of two structural domains, F(1) containing the extramembraneous catalytic core and F(0) containing the membrane proton channel, linked together by a central stalk and a peripheral stalk. During catalysis, ATP synthesis in the catalytic domain of F(1) is coupled via a rotary mechanism of the central stalk subunits to proton translocation. Key component of the F(0) channel; it plays a direct role in translocation across the membrane. A homomeric c-ring of between 10-14 subunits forms the central stalk rotor element with the F(1) delta and epsilon subunits. The chain is ATP synthase subunit c from Clostridium beijerinckii (strain ATCC 51743 / NCIMB 8052) (Clostridium acetobutylicum).